A 1093-amino-acid chain; its full sequence is Error-prone DNA polymerase (1093 aa).

Residues 1–55 (MGWFNGPPSWAEMERVLDSKPRRAGESAAPEPDGPLSRGRATYRPPDEGRAARSS) form a disordered region. A compositionally biased stretch (basic and acidic residues) spans 12–25 (EMERVLDSKPRRAG).

This sequence belongs to the DNA polymerase type-C family. DnaE2 subfamily.

The protein localises to the cytoplasm. The enzyme catalyses DNA(n) + a 2'-deoxyribonucleoside 5'-triphosphate = DNA(n+1) + diphosphate. Functionally, DNA polymerase involved in damage-induced mutagenesis and translesion synthesis (TLS). It is not the major replicative DNA polymerase. This chain is Error-prone DNA polymerase, found in Mycolicibacterium paratuberculosis (strain ATCC BAA-968 / K-10) (Mycobacterium paratuberculosis).